Here is a 308-residue protein sequence, read N- to C-terminus: Putative cathepsin L 3 (308 aa).

The signal sequence occupies residues 1–21; it reads MKQFLTAAIVTLLMTAGYYHL. Residues 22-110 constitute a propeptide, activation peptide; that stretch reads QEDDTNDFER…GASLPEVQLE (89 aa). Cystine bridges form between Cys129-Cys170 and Cys254-Cys298. Catalysis depends on residues His261 and Asn278.

The protein belongs to the peptidase C1 family.

The protein resides in the secreted. The catalysed reaction is Specificity close to that of papain. As compared to cathepsin B, cathepsin L exhibits higher activity toward protein substrates, but has little activity on Z-Arg-Arg-NHMec, and no peptidyl-dipeptidase activity.. Its function is as follows. May be involved in extracellular digestion. The sequence is that of Putative cathepsin L 3 from Paramecium tetraurelia.